Consider the following 335-residue polypeptide: Ubiquinone biosynthesis protein COQ4, mitochondrial (335 aa).

The transit peptide at 1–10 (MLRLSLLRST) directs the protein to the mitochondrion. Residues His210, Asp211, His214, and Glu226 each coordinate Zn(2+).

The protein belongs to the COQ4 family. As to quaternary structure, component of a multi-subunit COQ enzyme complex, composed of at least COQ3, COQ4, COQ5, COQ6, COQ7 and COQ9. Interacts with COQ3. Zn(2+) is required as a cofactor.

Its subcellular location is the mitochondrion inner membrane. It catalyses the reaction 4-hydroxy-3-methoxy-5-(all-trans-hexaprenyl)benzoate + H(+) = 2-methoxy-6-(all-trans-hexaprenyl)phenol + CO2. It functions in the pathway cofactor biosynthesis; ubiquinone biosynthesis. Its function is as follows. Lyase that catalyzes the C1-decarboxylation of 4-hydroxy-3-methoxy-5-(all-trans-hexaprenyl)benzoic acid into 2-methoxy-6-(all-trans-hexaprenyl)phenol during ubiquinone biosynthesis. May play a role in organizing a multi-subunit COQ enzyme complex required for coenzyme Q biosynthesis. Required for steady-state levels of COQ3, COQ4, COQ6, COQ7 and COQ9 polypeptides. This chain is Ubiquinone biosynthesis protein COQ4, mitochondrial, found in Saccharomyces cerevisiae (strain ATCC 204508 / S288c) (Baker's yeast).